Here is a 365-residue protein sequence, read N- to C-terminus: Putative F-box/kelch-repeat protein At4g39290 (365 aa).

The 49-residue stretch at 10 to 58 folds into the F-box domain; sequence QMTFSMLPDDLVLNCLARVSKVYYPSLSFVSKKFRSLIASTELQELRSF. 2 Kelch repeats span residues 118-165 and 167-213; these read DIYA…CVLN and KIYV…KIVG.

In Arabidopsis thaliana (Mouse-ear cress), this protein is Putative F-box/kelch-repeat protein At4g39290.